The sequence spans 339 residues: Anthranilate phosphoribosyltransferase (339 aa).

Residues Gly78, 81–82 (GD), Thr86, 88–91 (NAST), 106–114 (KHGNRSVTS), and Ser118 each bind 5-phospho-alpha-D-ribose 1-diphosphate. Anthranilate is bound at residue Gly78. Residue Ser90 coordinates Mg(2+). Asn109 is an anthranilate binding site. Arg164 provides a ligand contact to anthranilate. Asp225 and Glu226 together coordinate Mg(2+). Residues 248–265 (TVAPEDVGLDRADPKDVA) are compositionally biased toward basic and acidic residues. Positions 248-271 (TVAPEDVGLDRADPKDVAGADPET) are disordered.

The protein belongs to the anthranilate phosphoribosyltransferase family. As to quaternary structure, homodimer. Mg(2+) serves as cofactor.

It catalyses the reaction N-(5-phospho-beta-D-ribosyl)anthranilate + diphosphate = 5-phospho-alpha-D-ribose 1-diphosphate + anthranilate. The protein operates within amino-acid biosynthesis; L-tryptophan biosynthesis; L-tryptophan from chorismate: step 2/5. Its function is as follows. Catalyzes the transfer of the phosphoribosyl group of 5-phosphorylribose-1-pyrophosphate (PRPP) to anthranilate to yield N-(5'-phosphoribosyl)-anthranilate (PRA). The sequence is that of Anthranilate phosphoribosyltransferase from Methanopyrus kandleri (strain AV19 / DSM 6324 / JCM 9639 / NBRC 100938).